Reading from the N-terminus, the 144-residue chain is Large ribosomal subunit protein uL15 (144 aa).

Positions 1-16 (MVVRKEKKSRKYRGYR) are enriched in basic residues. The disordered stretch occupies residues 1–35 (MVVRKEKKSRKYRGYRTHGWGTKGQHRDRGAQGGR).

Belongs to the universal ribosomal protein uL15 family. As to quaternary structure, part of the 50S ribosomal subunit.

Functionally, binds to the 23S rRNA. The sequence is that of Large ribosomal subunit protein uL15 from Sulfolobus acidocaldarius (strain ATCC 33909 / DSM 639 / JCM 8929 / NBRC 15157 / NCIMB 11770).